A 463-amino-acid polypeptide reads, in one-letter code: Fumarate hydratase class II (463 aa).

Substrate is bound by residues 97–99 (SGT), arginine 125, 128–131 (HPND), 138–140 (SSN), and threonine 186. The segment covering 121–134 (RGEGRKVHPNDHVN) has biased composition (basic and acidic residues). The tract at residues 121-142 (RGEGRKVHPNDHVNRGQSSNDT) is disordered. The active-site Proton donor/acceptor is histidine 187. Serine 317 is an active-site residue. Substrate is bound by residues serine 318 and 323–325 (KVN).

This sequence belongs to the class-II fumarase/aspartase family. Fumarase subfamily. As to quaternary structure, homotetramer.

The protein resides in the cytoplasm. It carries out the reaction (S)-malate = fumarate + H2O. It participates in carbohydrate metabolism; tricarboxylic acid cycle; (S)-malate from fumarate: step 1/1. Its function is as follows. Involved in the TCA cycle. Catalyzes the stereospecific interconversion of fumarate to L-malate. In Bordetella bronchiseptica (strain ATCC BAA-588 / NCTC 13252 / RB50) (Alcaligenes bronchisepticus), this protein is Fumarate hydratase class II.